Reading from the N-terminus, the 771-residue chain is DNA helicase/primase complex-associated protein (771 aa).

The protein belongs to the herpesviridae HEPA family. As to quaternary structure, associates with the primase and the helicase to form the helicase-primase complex. Interacts with the origin-binding protein. Interacts with the polymerase catalytic subunit.

It is found in the host nucleus. Its function is as follows. Component of the helicase/primase complex. Unwinds the DNA at the replication forks and generates single-stranded DNA for both leading and lagging strand synthesis. The primase synthesizes short RNA primers on the lagging strand that the polymerase presumably elongates using dNTPs. The primase-associated factor has no known catalytic activity in the complex and may serve to facilitate the formation of the replisome by directly interacting with the origin-binding protein and the polymerase. The protein is DNA helicase/primase complex-associated protein of Varicella-zoster virus (strain Oka vaccine) (HHV-3).